The chain runs to 188 residues: Ribosome-recycling factor (188 aa).

This sequence belongs to the RRF family.

It localises to the cytoplasm. Its function is as follows. Responsible for the release of ribosomes from messenger RNA at the termination of protein biosynthesis. May increase the efficiency of translation by recycling ribosomes from one round of translation to another. This is Ribosome-recycling factor from Cereibacter sphaeroides (strain ATCC 17023 / DSM 158 / JCM 6121 / CCUG 31486 / LMG 2827 / NBRC 12203 / NCIMB 8253 / ATH 2.4.1.) (Rhodobacter sphaeroides).